Here is a 304-residue protein sequence, read N- to C-terminus: Glutamyl-Q tRNA(Asp) synthetase (304 aa).

L-glutamate is bound by residues 14-18 and Glu50; that span reads RFAPS. Residues 17-27 carry the 'HIGH' region motif; the sequence is PSPSGPLHFGS. 4 residues coordinate Zn(2+): Cys106, Cys108, Tyr120, and Cys124. The L-glutamate site is built by Tyr178 and Arg196. The short motif at 234 to 238 is the 'KMSKS' region element; it reads KLSKQ. Lys237 lines the ATP pocket.

Belongs to the class-I aminoacyl-tRNA synthetase family. GluQ subfamily. It depends on Zn(2+) as a cofactor.

Its function is as follows. Catalyzes the tRNA-independent activation of glutamate in presence of ATP and the subsequent transfer of glutamate onto a tRNA(Asp). Glutamate is transferred on the 2-amino-5-(4,5-dihydroxy-2-cyclopenten-1-yl) moiety of the queuosine in the wobble position of the QUC anticodon. The chain is Glutamyl-Q tRNA(Asp) synthetase from Vibrio cholerae serotype O1 (strain ATCC 39315 / El Tor Inaba N16961).